Here is a 237-residue protein sequence, read N- to C-terminus: Ras-related protein Rab-23 (237 aa).

Ala19 provides a ligand contact to GDP. GTP-binding residues include Val20, Gly21, Lys22, Ser23, and Ser24. GDP is bound by residues Gly21, Lys22, Ser23, Ser24, and Asp37. Ser23 lines the Mg(2+) pocket. The Switch 1 motif lies at 28 to 46; it reads RYCKGIFTKDYKKTIGVDF. Position 38 (Tyr38) interacts with GTP. Lys40 is a binding site for GDP. GTP is bound at residue Thr41. Positions 41 and 64 each coordinate Mg(2+). Positions 65 to 84 match the Switch 2 motif; sequence TAGQEEFDAITKAYYRGAQA. 7 residues coordinate GTP: Gly67, Asn121, Lys122, Asp124, Ser151, Val152, and Lys153. Residues Asn121, Lys122, and Asp124 each contribute to the GDP site. Val152 and Lys153 together coordinate GDP. A phosphoserine mark is found at Ser186 and Ser187. The tract at residues 204-237 is disordered; the sequence is QNSSSLNGGDVINLRPNKQRTKRTRNPFSSCSVP. A Cysteine methyl ester modification is found at Cys234. The S-geranylgeranyl cysteine moiety is linked to residue Cys234. Residues 235 to 237 constitute a propeptide, removed in mature form; it reads SVP.

Belongs to the small GTPase superfamily. Rab family. In terms of assembly, interacts with SUFU. Mg(2+) serves as cofactor. In terms of tissue distribution, detected in brain neurons (at protein level). Forebrain and midbrain.

The protein resides in the cell membrane. The protein localises to the cytoplasm. Its subcellular location is the endosome membrane. It is found in the cytoplasmic vesicle. It localises to the autophagosome. The protein resides in the phagosome. The protein localises to the phagosome membrane. The catalysed reaction is GTP + H2O = GDP + phosphate + H(+). Its activity is regulated as follows. Regulated by guanine nucleotide exchange factors (GEFs) which promote the exchange of bound GDP for free GTP. Regulated by GTPase activating proteins (GAPs) which increase the GTP hydrolysis activity. Inhibited by GDP dissociation inhibitors (GDIs). Its function is as follows. The small GTPases Rab are key regulators of intracellular membrane trafficking, from the formation of transport vesicles to their fusion with membranes. Rabs cycle between an inactive GDP-bound form and an active GTP-bound form that is able to recruit to membranes different set of downstream effectors directly responsible for vesicle formation, movement, tethering and fusion. Plays a role in autophagic vacuole assembly, and mediates defense against pathogens, such as S.aureus, by promoting their capture by autophagosomes that then merge with lysosomes. Together with SUFU, prevents nuclear import of GLI1, and thereby inhibits GLI1 transcription factor activity. Regulates GLI1 in differentiating chondrocytes. Likewise, regulates GLI3 proteolytic processing and modulates GLI2 and GLI3 transcription factor activity. In Mus musculus (Mouse), this protein is Ras-related protein Rab-23.